The following is a 312-amino-acid chain: Coiled-coil domain-containing protein 42 homolog (312 aa).

Coiled-coil stretches lie at residues R34 to E121 and A172 to Q233.

It belongs to the CFAP73 family.

The chain is Coiled-coil domain-containing protein 42 homolog from Nematostella vectensis (Starlet sea anemone).